Reading from the N-terminus, the 283-residue chain is 4-hydroxy-3-methylbut-2-enyl diphosphate reductase (283 aa).

Cysteine 12 is a binding site for [4Fe-4S] cluster. Residues histidine 40 and histidine 73 each contribute to the (2E)-4-hydroxy-3-methylbut-2-enyl diphosphate site. Residues histidine 40 and histidine 73 each coordinate dimethylallyl diphosphate. Isopentenyl diphosphate contacts are provided by histidine 40 and histidine 73. [4Fe-4S] cluster is bound at residue cysteine 95. Histidine 123 provides a ligand contact to (2E)-4-hydroxy-3-methylbut-2-enyl diphosphate. Histidine 123 is a binding site for dimethylallyl diphosphate. Histidine 123 lines the isopentenyl diphosphate pocket. Glutamate 125 acts as the Proton donor in catalysis. Threonine 161 is a binding site for (2E)-4-hydroxy-3-methylbut-2-enyl diphosphate. Residue cysteine 189 participates in [4Fe-4S] cluster binding. Residues serine 217, asparagine 219, and serine 261 each contribute to the (2E)-4-hydroxy-3-methylbut-2-enyl diphosphate site. Residues serine 217, asparagine 219, and serine 261 each coordinate dimethylallyl diphosphate. 3 residues coordinate isopentenyl diphosphate: serine 217, asparagine 219, and serine 261.

This sequence belongs to the IspH family. The cofactor is [4Fe-4S] cluster.

The enzyme catalyses isopentenyl diphosphate + 2 oxidized [2Fe-2S]-[ferredoxin] + H2O = (2E)-4-hydroxy-3-methylbut-2-enyl diphosphate + 2 reduced [2Fe-2S]-[ferredoxin] + 2 H(+). It catalyses the reaction dimethylallyl diphosphate + 2 oxidized [2Fe-2S]-[ferredoxin] + H2O = (2E)-4-hydroxy-3-methylbut-2-enyl diphosphate + 2 reduced [2Fe-2S]-[ferredoxin] + 2 H(+). It functions in the pathway isoprenoid biosynthesis; dimethylallyl diphosphate biosynthesis; dimethylallyl diphosphate from (2E)-4-hydroxy-3-methylbutenyl diphosphate: step 1/1. Its pathway is isoprenoid biosynthesis; isopentenyl diphosphate biosynthesis via DXP pathway; isopentenyl diphosphate from 1-deoxy-D-xylulose 5-phosphate: step 6/6. Functionally, catalyzes the conversion of 1-hydroxy-2-methyl-2-(E)-butenyl 4-diphosphate (HMBPP) into a mixture of isopentenyl diphosphate (IPP) and dimethylallyl diphosphate (DMAPP). Acts in the terminal step of the DOXP/MEP pathway for isoprenoid precursor biosynthesis. This is 4-hydroxy-3-methylbut-2-enyl diphosphate reductase from Citrifermentans bemidjiense (strain ATCC BAA-1014 / DSM 16622 / JCM 12645 / Bem) (Geobacter bemidjiensis).